The chain runs to 208 residues: MSKGTLYIVSAPSGAGKSSLINALLETNPTYDMKVSVSHTTRGMRPGEENGVHYNFISVEEFTELTEQESFLEHAEVFGNYYGTSRPWIEDQLNKGIDVFLDIDWQGARQIRIQMPAAKSLFILPPSKEELERRLNARGQDSETIIARRMQEARSEISHYNEYDYVIVNDDFDAALMDFKAIIRAERLKQDKQTAKYNSMLNALLAEQ.

The 181-residue stretch at 4–184 (GTLYIVSAPS…ALMDFKAIIR (181 aa)) folds into the Guanylate kinase-like domain. Position 11-18 (11-18 (APSGAGKS)) interacts with ATP.

Belongs to the guanylate kinase family.

It is found in the cytoplasm. It carries out the reaction GMP + ATP = GDP + ADP. In terms of biological role, essential for recycling GMP and indirectly, cGMP. This is Guanylate kinase from Photobacterium profundum (strain SS9).